The chain runs to 279 residues: Pantothenate synthetase (279 aa).

26-33 (MGALHSGH) contributes to the ATP binding site. The active-site Proton donor is His-33. Gln-57 contacts (R)-pantoate. Gln-57 is a binding site for beta-alanine. 147–150 (GQKD) serves as a coordination point for ATP. Residue Gln-153 coordinates (R)-pantoate. Residues Ile-176 and 184–187 (ESSR) each bind ATP.

It belongs to the pantothenate synthetase family. Homodimer.

The protein localises to the cytoplasm. The catalysed reaction is (R)-pantoate + beta-alanine + ATP = (R)-pantothenate + AMP + diphosphate + H(+). It functions in the pathway cofactor biosynthesis; (R)-pantothenate biosynthesis; (R)-pantothenate from (R)-pantoate and beta-alanine: step 1/1. Functionally, catalyzes the condensation of pantoate with beta-alanine in an ATP-dependent reaction via a pantoyl-adenylate intermediate. This is Pantothenate synthetase from Corynebacterium glutamicum (strain R).